The sequence spans 539 residues: Nucleobase-ascorbate transporter 8 (539 aa).

Residues 1–20 (MAGDGVENAKPPQKQEDLQP) are disordered. The next 12 helical transmembrane spans lie at 44 to 64 (ILLG…IPTM), 79 to 99 (LIQT…FFGT), 101 to 121 (LPAV…IVLA), 141 to 161 (IQGA…SGLW), 167 to 187 (FLSP…LYEQ), 189 to 209 (FPML…LVIF), 229 to 249 (FAVI…TIGG), 295 to 315 (IFAM…TYIA), 368 to 388 (VGSR…SILG), 399 to 421 (APIV…LSLI), 433 to 453 (FILG…YQYT), and 470 to 490 (NIIN…AFFL).

This sequence belongs to the nucleobase:cation symporter-2 (NCS2) (TC 2.A.40) family. In terms of tissue distribution, highly expressed in ovules, endosperm and embryo.

It localises to the cell membrane. This Arabidopsis thaliana (Mouse-ear cress) protein is Nucleobase-ascorbate transporter 8 (NAT8).